The sequence spans 533 residues: MEIRNIKEFEKASKKLQKDTLKIALALLFLIGAALLALIFGQANSKGLLLIFAAVIGGYMAMNIGANDVSNNVGPAVGSKAISMGGAILIAAVCEMLGAIIAGGEVVSTIKGRIVSPEFINDAHVFINVMLASLLSGALWLHVATLIGAPVSTSHSVVGGIMGAGMAAAGMSAINWHFLSGIVASWVISPLMGALIAMFFLMLIKKTIAYKEDKKSAALKVVPYLVALMSLAFSWYLIVKVLKRLYAVGFEIQLACGCVLALLIFILFKRFVLKKAPQLENSHESVNELFNVPLIFAAALLSFAHGANDVANAIGPLAAISQTLEDASSPMGSTLNSVPLWIMVVGAAGIALGLSLYGPKLIKTVGSEITELDKMQAFCIALSAVITVLLASQLGLPVSSTHIVVGAVFGVGFLRERLREQSRRRFARIRDNIVAAHFGEDLEEIEGFLERFDKANLKEKSLMLESLKKSKNTAIALELKKKEKKSLKKVYKEEVIKRSILKKIVTAWLVTVPVSALLGALLFVALGFIEKYF.

A run of 12 helical transmembrane segments spans residues Ile23–Ala43, Gly47–Asn67, Ala81–Ile101, Val129–Ala149, Ser156–Trp176, Ile182–Met202, Val221–Val241, Val248–Phe268, Val286–Gly306, Val338–Gly358, Leu372–Ser392, and Leu509–Ile529.

This sequence belongs to the inorganic phosphate transporter (PiT) (TC 2.A.20) family.

Its subcellular location is the cell membrane. Functionally, potential transporter for phosphate. The sequence is that of Putative phosphate permease jhp_1384 from Helicobacter pylori (strain J99 / ATCC 700824) (Campylobacter pylori J99).